We begin with the raw amino-acid sequence, 120 residues long: Large ribosomal subunit protein bL12 (120 aa).

The span at 95–112 (KEGVSKEEAEEVQGKLEE) shows a compositional bias: basic and acidic residues. Positions 95-120 (KEGVSKEEAEEVQGKLEEAGASVEVK) are disordered.

Belongs to the bacterial ribosomal protein bL12 family. Homodimer. Part of the ribosomal stalk of the 50S ribosomal subunit. Forms a multimeric L10(L12)X complex, where L10 forms an elongated spine to which 2 to 4 L12 dimers bind in a sequential fashion. Binds GTP-bound translation factors.

In terms of biological role, forms part of the ribosomal stalk which helps the ribosome interact with GTP-bound translation factors. Is thus essential for accurate translation. The protein is Large ribosomal subunit protein bL12 of Oceanobacillus iheyensis (strain DSM 14371 / CIP 107618 / JCM 11309 / KCTC 3954 / HTE831).